Here is a 3391-residue protein sequence, read N- to C-terminus: Genome polyprotein (3391 aa).

The segment at 1-15 (MNNQRKKTARPSFNM) is interaction with host EXOC1. The Cytoplasmic segment spans residues 1 to 101 (MNNQRKKTAR…LNIMNRRKRS (101 aa)). The segment at 37 to 72 (LLSGQGPMKLVMAFIAFLRFLAIPPTAGILARWGSF) is hydrophobic; homodimerization of capsid protein C. Residues 101 to 114 (SVTMLLMLLPTALA) constitute a propeptide, ER anchor for the capsid protein C, removed in mature form by serine protease NS3. A helical transmembrane segment spans residues 102–119 (VTMLLMLLPTALAFHLTT). Topologically, residues 120 to 242 (RGGEPHMIVS…QIQRVETWAL (123 aa)) are extracellular. N-linked (GlcNAc...) asparagine; by host glycosylation is present at N183. Residues 243–260 (RHPGFTVIALFLAHAIGT) traverse the membrane as a helical segment. S261 is a topological domain (cytoplasmic). Residues 262-280 (ITQKGIIFILLMLVTPSMA) form a helical membrane-spanning segment. The Extracellular portion of the chain corresponds to 281 to 725 (MRCVGIGSRD…HQVFGTAYGV (445 aa)). Cystine bridges form between C283–C310, C340–C401, C354–C385, and C372–C396. The N-linked (GlcNAc...) asparagine; by host glycan is linked to N347. A fusion peptide region spans residues 378-391 (DRGWGNGCGLFGKG). Residue N433 is glycosylated (N-linked (GlcNAc...) asparagine; by host). 2 disulfides stabilise this stretch: C465-C565 and C582-C613. The helical transmembrane segment at 726 to 746 (LFSGVSWTMKIGIGILLTWLG) threads the bilayer. Over 747 to 752 (LNSRST) the chain is Cytoplasmic. Residues 753–773 (SLSMTCIAVGMVTLYLGVMVQ) traverse the membrane as a helical segment. Topologically, residues 774–1198 (ADSGCVINWK…NASDRMGMGT (425 aa)) are extracellular. Cystine bridges form between C778–C789, C829–C917, C953–C997, C1054–C1103, C1065–C1087, and C1086–C1090. N-linked (GlcNAc...) asparagine; by host glycans are attached at residues N904 and N981. N-linked (GlcNAc...) asparagine; by host glycosylation is present at N1189. The chain crosses the membrane as a helical span at residues 1199–1219 (TYLALMATFKMRPMFAVGLLF). The Cytoplasmic segment spans residues 1220 to 1225 (RRLTSR). The helical transmembrane segment at 1226–1244 (EVLLLTIGLSLVASVELPN) threads the bilayer. The Lumenal portion of the chain corresponds to 1245-1268 (SLEELGDGLAMGIMILKLLTDFQS). The helical transmembrane segment at 1269 to 1289 (HQLWATLLSLTFVKTTFSLHY) threads the bilayer. A1290 is a topological domain (cytoplasmic). The chain crosses the membrane as a helical span at residues 1291-1309 (WKTMAMVLSIVSLFPLCLS). Residues 1310–1314 (TTSQK) are Lumenal-facing. Residues 1315 to 1335 (TTWLPVLLGSLGCKPLTMFLI) traverse the membrane as a helical segment. Over 1336 to 1345 (AENKIWGRKS) the chain is Cytoplasmic. Residues 1346–1366 (WPLNEGIMAVGIVSILLSSLL) traverse the membrane as a helical segment. Topologically, residues 1367–1369 (KND) are lumenal. A helical transmembrane segment spans residues 1370–1390 (VPLAGPLIAGGMLIACYVISG). Residues 1391–1446 (SSADLSLEKAAEVSWEEEAEHSGASHNILVEVQDDGTMKIKDEERDDTLTILLKAT) are Cytoplasmic-facing. Residues 1397 to 1436 (LEKAAEVSWEEEAEHSGASHNILVEVQDDGTMKIKDEERD) form an interacts with and activates NS3 protease region. An intramembrane region (helical) is located at residues 1447 to 1467 (LLAVSGVYPLSIPATLFVWYF). Topologically, residues 1468–2147 (WQKKKQRSGV…MEELPDTIET (680 aa)) are cytoplasmic. In terms of domain architecture, Peptidase S7 spans 1475 to 1652 (SGVLWDTPSP…KASQEGPLPE (178 aa)). Catalysis depends on charge relay system; for serine protease NS3 activity residues H1525, D1549, and S1609. Positions 1655 to 1811 (DEVFRKRNLT…QSNAVIQDEE (157 aa)) constitute a Helicase ATP-binding domain. The interval 1659–1662 (RKRN) is important for RNA-binding. Position 1668–1675 (1668–1675 (LHPGSGKT)) interacts with ATP. The short motif at 1759–1762 (DEAH) is the DEAH box element. Residues 1821–1988 (SGYEWITDFP…IIPALFEPER (168 aa)) enclose the Helicase C-terminal domain. The residue at position 1863 (K1863) is an N6-acetyllysine; by host. Residues 2148–2168 (LMLLALIAVLTGGVTLFFLSG) traverse the membrane as a helical segment. The Lumenal portion of the chain corresponds to 2169–2170 (KG). The segment at residues 2171–2191 (LGKTSIGLLCVMASSVLLWMA) is an intramembrane region (helical). Residue S2192 is a topological domain, lumenal. A helical membrane pass occupies residues 2193-2213 (VEPHWIAASIILEFFLMVLLI). The Cytoplasmic portion of the chain corresponds to 2214-2228 (PEPDRQRTPQDNQLA). A helical membrane pass occupies residues 2229-2249 (YVVIGLLFMILTVAANEMGLL). Residues 2250 to 2275 (ETTKKDLGIGHVAAENHHHATMLDVD) are Lumenal-facing. Residues 2276–2296 (LRPASAWTLYAVATTVITPMM) constitute an intramembrane region (helical). Over 2297-2348 (RHTIENTTANISLTAIANQAAILMGLDKGWPISKMDIGVPLLALGCYSQVNP) the chain is Lumenal. N-linked (GlcNAc...) asparagine; by host glycans are attached at residues N2302 and N2306. The helical transmembrane segment at 2349 to 2369 (LTLTAAVLMLVAHYAIIGPGL) threads the bilayer. Topologically, residues 2370–2414 (QAKATREAQKRTAAGIMKNPTVDGIVAIDLDPVVYDAKFEKQLGQ) are cytoplasmic. A helical membrane pass occupies residues 2415–2435 (IMLLILCTSQILLMRTTWALC). Residues 2436-2460 (ESITLATGPLTTLWEGSPGKFWNTT) lie on the Lumenal side of the membrane. A glycan (N-linked (GlcNAc...) asparagine; by host) is linked at N2458. A helical transmembrane segment spans residues 2461–2481 (IAVSMANIFRGSYLAGAGLAF). Residues 2482–3391 (SLMKSLGGGR…NESDPEGALW (910 aa)) lie on the Cytoplasmic side of the membrane. An mRNA cap 0-1 NS5-type MT domain is found at 2494–2755 (TGAKGKHWER…DVDLGAGTRH (262 aa)). S2548 serves as a coordination point for S-adenosyl-L-methionine. S2548 carries the post-translational modification Phosphoserine. K2553 (for 2'-O-MTase activity) is an active-site residue. The short motif at 2569-2572 (VIDL) is the SUMO-interacting motif element. Residues G2578, W2579, T2596, K2597, D2623, and V2624 each coordinate S-adenosyl-L-methionine. The active-site For 2'-O-MTase activity is D2638. Residue I2639 participates in S-adenosyl-L-methionine binding. Catalysis depends on for 2'-O-MTase activity residues K2672 and E2708. Residue Y2710 participates in S-adenosyl-L-methionine binding. 4 residues coordinate Zn(2+): E2929, H2933, C2938, and C2941. Residues 3019-3168 (GNMYADDTAG…KPIDDRFATA (150 aa)) enclose the RdRp catalytic domain. 3 residues coordinate Zn(2+): H3203, C3219, and C3338.

It in the N-terminal section; belongs to the class I-like SAM-binding methyltransferase superfamily. mRNA cap 0-1 NS5-type methyltransferase family. Homodimer. Interacts (via N-terminus) with host EXOC1 (via C-terminus); this interaction results in EXOC1 degradation through the proteasome degradation pathway. As to quaternary structure, forms heterodimers with envelope protein E in the endoplasmic reticulum and Golgi. In terms of assembly, homodimer; in the endoplasmic reticulum and Golgi. Interacts with protein prM. Interacts with non-structural protein 1. Homodimer; Homohexamer when secreted. Interacts with envelope protein E. As to quaternary structure, interacts (via N-terminus) with serine protease NS3. In terms of assembly, forms a heterodimer with serine protease NS3. May form homooligomers. Forms a heterodimer with NS2B. Interacts with NS4B. Interacts with unphosphorylated RNA-directed RNA polymerase NS5; this interaction stimulates RNA-directed RNA polymerase NS5 guanylyltransferase activity. Interacts with host SHFL. As to quaternary structure, interacts with host MAVS; this interaction inhibits the synthesis of IFN-beta. Interacts with host SHFL. Interacts with host AUP1; the interaction occurs in the presence of Dengue virus NS4B and induces lipophagy which facilitates production of virus progeny particles. In terms of assembly, interacts with serine protease NS3. Homodimer. Interacts with host STAT2; this interaction inhibits the phosphorylation of the latter, and, when all viral proteins are present (polyprotein), targets STAT2 for degradation. Interacts with serine protease NS3. Specific enzymatic cleavages in vivo yield mature proteins. Cleavages in the lumen of endoplasmic reticulum are performed by host signal peptidase, whereas cleavages in the cytoplasmic side are performed by serine protease NS3. Signal cleavage at the 2K-4B site requires a prior NS3 protease-mediated cleavage at the 4A-2K site. Post-translationally, cleaved in post-Golgi vesicles by a host furin, releasing the mature small envelope protein M, and peptide pr. This cleavage is incomplete as up to 30% of viral particles still carry uncleaved prM. In terms of processing, N-glycosylated. N-glycosylated. The excreted form is glycosylated and this is required for efficient secretion of the protein from infected cells. Post-translationally, acetylated by host KAT5. Acetylation modulates NS3 RNA-binding and unwinding activities and plays an important positive role for viral replication. In terms of processing, sumoylation of RNA-directed RNA polymerase NS5 increases NS5 protein stability allowing proper viral RNA replication. Phosphorylated on serines residues. This phosphorylation may trigger NS5 nuclear localization.

It localises to the virion. The protein resides in the host nucleus. The protein localises to the host cytoplasm. Its subcellular location is the host perinuclear region. It is found in the secreted. It localises to the virion membrane. The protein resides in the host endoplasmic reticulum membrane. The protein localises to the host mitochondrion. The enzyme catalyses Selective hydrolysis of -Xaa-Xaa-|-Yaa- bonds in which each of the Xaa can be either Arg or Lys and Yaa can be either Ser or Ala.. It carries out the reaction RNA(n) + a ribonucleoside 5'-triphosphate = RNA(n+1) + diphosphate. The catalysed reaction is a ribonucleoside 5'-triphosphate + H2O = a ribonucleoside 5'-diphosphate + phosphate + H(+). It catalyses the reaction ATP + H2O = ADP + phosphate + H(+). The enzyme catalyses a 5'-end (5'-triphosphoguanosine)-ribonucleoside in mRNA + S-adenosyl-L-methionine = a 5'-end (N(7)-methyl 5'-triphosphoguanosine)-ribonucleoside in mRNA + S-adenosyl-L-homocysteine. It carries out the reaction a 5'-end (N(7)-methyl 5'-triphosphoguanosine)-ribonucleoside in mRNA + S-adenosyl-L-methionine = a 5'-end (N(7)-methyl 5'-triphosphoguanosine)-(2'-O-methyl-ribonucleoside) in mRNA + S-adenosyl-L-homocysteine + H(+). In terms of biological role, plays a role in virus budding by binding to the cell membrane and gathering the viral RNA into a nucleocapsid that forms the core of a mature virus particle. During virus entry, may induce genome penetration into the host cytoplasm after hemifusion induced by the surface proteins. Can migrate to the cell nucleus where it modulates host functions. Overcomes the anti-viral effects of host EXOC1 by sequestering and degrading the latter through the proteasome degradation pathway. Functionally, inhibits RNA silencing by interfering with host Dicer. Prevents premature fusion activity of envelope proteins in trans-Golgi by binding to envelope protein E at pH6.0. After virion release in extracellular space, gets dissociated from E dimers. Its function is as follows. Acts as a chaperone for envelope protein E during intracellular virion assembly by masking and inactivating envelope protein E fusion peptide. prM is the only viral peptide matured by host furin in the trans-Golgi network probably to avoid catastrophic activation of the viral fusion activity in acidic Golgi compartment prior to virion release. prM-E cleavage is inefficient, and many virions are only partially matured. These uncleaved prM would play a role in immune evasion. In terms of biological role, may play a role in virus budding. Exerts cytotoxic effects by activating a mitochondrial apoptotic pathway through M ectodomain. May display a viroporin activity. Functionally, binds to host cell surface receptor and mediates fusion between viral and cellular membranes. Envelope protein is synthesized in the endoplasmic reticulum in the form of heterodimer with protein prM. They play a role in virion budding in the ER, and the newly formed immature particle is covered with 60 spikes composed of heterodimer between precursor prM and envelope protein E. The virion is transported to the Golgi apparatus where the low pH causes dissociation of PrM-E heterodimers and formation of E homodimers. prM-E cleavage is inefficient, and many virions are only partially matured. These uncleaved prM would play a role in immune evasion. Involved in immune evasion, pathogenesis and viral replication. Once cleaved off the polyprotein, is targeted to three destinations: the viral replication cycle, the plasma membrane and the extracellular compartment. Essential for viral replication. Required for formation of the replication complex and recruitment of other non-structural proteins to the ER-derived membrane structures. Excreted as a hexameric lipoparticle that plays a role against host immune response. Antagonizing the complement function. Binds to the host macrophages and dendritic cells. Inhibits signal transduction originating from Toll-like receptor 3 (TLR3). Its function is as follows. Disrupts the host endothelial glycocalyx layer of host pulmonary microvascular endothelial cells, inducing degradation of sialic acid and shedding of heparan sulfate proteoglycans. NS1 induces expression of sialidases, heparanase, and activates cathepsin L, which activates heparanase via enzymatic cleavage. These effects are probably linked to the endothelial hyperpermeability observed in severe dengue disease. In terms of biological role, component of the viral RNA replication complex that functions in virion assembly and antagonizes the host immune response. Functionally, required cofactor for the serine protease function of NS3. May have membrane-destabilizing activity and form viroporins. Displays three enzymatic activities: serine protease, NTPase and RNA c. NS3 serine protease, in association with NS2B, performs its autocleavage and cleaves the polyprotein at dibasic sites in the cytoplasm: C-prM, NS2A-NS2B, NS2B-NS3, NS3-NS4A, NS4A-2K and NS4B-NS5. NS3 RNA helicase binds RNA and unwinds dsRNA in the 3' to 5' direction. Its function is as follows. Regulates the ATPase activity of the NS3 helicase activity. NS4A allows NS3 helicase to conserve energy during unwinding. Plays a role in the inhibition of the host innate immune response. Interacts with host MAVS and thereby prevents the interaction between RIGI and MAVS. In turn, IFN-beta production is impaired. Interacts with host AUP1 which mediates induction of lipophagy in host cells and facilitates production of virus progeny particles. In terms of biological role, functions as a signal peptide for NS4B and is required for the interferon antagonism activity of the latter. Functionally, induces the formation of ER-derived membrane vesicles where the viral replication takes place. Inhibits interferon (IFN)-induced host STAT1 phosphorylation and nuclear translocation, thereby preventing the establishment of cellular antiviral state by blocking the IFN-alpha/beta pathway. Replicates the viral (+) and (-) RNA genome, and performs the capping of genomes in the cytoplasm. NS5 methylates viral RNA cap at guanine N-7 and ribose 2'-O positions. Besides its role in RNA genome replication, also prevents the establishment of cellular antiviral state by blocking the interferon-alpha/beta (IFN-alpha/beta) signaling pathway. Inhibits host TYK2 and STAT2 phosphorylation, thereby preventing activation of JAK-STAT signaling pathway. The polypeptide is Genome polyprotein (Aedes aegypti (Yellowfever mosquito)).